The sequence spans 241 residues: uncharacterized protein (241 aa).

In terms of domain architecture, GGDEF spans 84–216 (TVVSLVVCDL…APGPVVAGRD (133 aa)). The tract at residues 215 to 241 (RDGEVVRLADSPPKSAHDRRRLRGNRP) is disordered. Basic residues predominate over residues 231–241 (HDRRRLRGNRP).

This is an uncharacterized protein from Streptomyces griseus.